Reading from the N-terminus, the 337-residue chain is CMRF35-like molecule 1 (337 aa).

Residues 1–19 (MHLSLLVPFLFWITGCCTA) form the signal peptide. An Ig-like V-type domain is found at 20 to 125 (EDPVTGPEEV…LDPMFKVTVN (106 aa)). Residues 20–193 (EDPVTGPEEV…GVGDGFLDLS (174 aa)) are Extracellular-facing. The segment at 39–45 (VQCRYTS) is plays an important role in murine norovirus (MNV) binding. 2 disulfides stabilise this stretch: Cys41–Cys109 and Cys55–Cys63. The chain crosses the membrane as a helical span at residues 194-214 (VLLPVISAVLLLLLLVASLFA). Topologically, residues 215–337 (WRMVRRQKKA…IRRPLPAAMP (123 aa)) are cytoplasmic. 2 disordered regions span residues 248-270 (QPRTSPGSSWKKGSSMSSSGKDH) and 318-337 (LEEETTEYSSIRRPLPAAMP). Over residues 252–266 (SPGSSWKKGSSMSSS) the composition is skewed to low complexity.

This sequence belongs to the CD300 family. In terms of assembly, interacts with PTPN6/SHP-1 in a tyrosine phosphorylation dependent manner. Interacts with IL4R. Phosphorylated on tyrosine. Expressed in myeloid cells. Present on the surface of macrophages (at protein level). Highly expressed by alveolar, splenic macrophages and bone marrow-derived dendritic cells. Expression is increased following aeroallergen challenge in macrophages, mast cells, and eosinophils.

It is found in the cell membrane. In terms of biological role, acts as an inhibitory receptor for myeloid cells and mast cells. Positively regulates the phagocytosis of apoptotic cells (efferocytosis) via phosphatidylserine (PS) recognition; recognizes and binds PS as a ligand which is expressed on the surface of apoptotic cells. Plays an important role in the maintenance of immune homeostasis, by promoting macrophage-mediated efferocytosis and by inhibiting dendritic cell-mediated efferocytosis. Negatively regulates Fc epsilon receptor-dependent mast cell activation and allergic responses via binding to ceramide which acts as a ligand. May act as a coreceptor for interleukin 4 (IL-4). Associates with and regulates IL-4 receptor alpha-mediated responses by augmenting IL-4- and IL-13-induced signaling. Negatively regulates the Toll-like receptor (TLR) signaling mediated by MYD88 and TRIF through activation of PTPN6/SHP-1 and PTPN11/SHP-2. Inhibits osteoclast formation. Induces macrophage cell death upon engagement. Functionally, (Microbial infection) Acts as a functional receptor for murine norovirus (MNV). Mediates binding to the cell surface and is both necessary and sufficient for viral entry and replication. This interaction requires Mg(2+) and Ca(2+) and is enhanced by bile acids. Primary determinant of MNV species tropism and is sufficient to render cells permissive to infection by MNV. Can render nonmurine mammalian cells susceptible to MNV infection. The sequence is that of CMRF35-like molecule 1 (Cd300lf) from Mus musculus (Mouse).